The primary structure comprises 152 residues: Protein D1 (152 aa).

It belongs to the phosphatidylethanolamine-binding protein family.

The polypeptide is Protein D1 (D1) (Onchocerca volvulus).